Consider the following 708-residue polypeptide: Caprin-1 (708 aa).

Low complexity-rich tracts occupy residues Met1–Ser15 and Gly22–Ser37. The interval Met1 to Gln48 is disordered. The residue at position 2 (Pro2) is an N-acetylproline. A Phosphoserine modification is found at Ser10. Residues Val58–Asp92 adopt a coiled-coil conformation. Ser113 carries the phosphoserine modification. A coiled-coil region spans residues Lys123–Gln151. Omega-N-methylarginine is present on Arg163. Residues Glu258–Val287 form a disordered region. Positions Gln269–Val287 are enriched in acidic residues. Ser333 and Ser341 each carry phosphoserine. Positions Gln358–Glu379 are G3BP1-binding. Positions Leu415 to Ala452 are enriched in polar residues. Disordered regions lie at residues Leu415–Lys459, Thr473–Lys497, Asn521–Leu559, and Tyr571–Asn708. 2 stretches are compositionally biased toward low complexity: residues Gln475 to Gln489 and Gln535 to Leu559. Residues His572–Tyr603 are compositionally biased toward polar residues. At Tyr623 the chain carries Phosphotyrosine. Arg624 and Arg631 each carry omega-N-methylarginine. Tyr634 and Tyr637 each carry phosphotyrosine. The residue at position 638 (Arg638) is an Omega-N-methylarginine. Residues Ser640–Ser656 are compositionally biased toward polar residues. Residues Ser642 and Ser648 are each glycosylated (O-linked (GlcNAc) serine). Phosphotyrosine is present on residues Tyr650, Tyr661, Tyr664, and Tyr669. 2 stretches are compositionally biased toward low complexity: residues Arg675–Ala685 and Asn696–Asn708. Arg697 carries the asymmetric dimethylarginine; alternate modification. An Omega-N-methylarginine; alternate modification is found at Arg697.

The protein belongs to the caprin family. May form homomultimers. Interacts with G3BP1; interaction is direct and promotes stress granule formation. Interacts with G3BP2; interaction is direct and promotes stress granule formation. Interacts with PQBP1. Interacts with DDX3X. Interacts (when phosphorylated by EPHA4) with FMR1; interaction with FMR1 promotes formation of a membraneless compartment. Post-translationally, tyrosine phosphorylation by EPHA4 promotes interaction with FMR1 and liquid-liquid phase separation (LLPS) for the formation of a membraneless compartment that concentrates mRNAs with associated regulatory factors. In terms of processing, O-glycosylated (O-GlcNAcylated), in a cell cycle-dependent manner. O-glycosylation by OGT inhibit ability to undergo liquid-liquid phase separation (LLPS).

Its subcellular location is the cytoplasm. The protein localises to the cytoplasmic ribonucleoprotein granule. It is found in the cytosol. The protein resides in the cell projection. It localises to the dendrite. Its subcellular location is the lamellipodium. Ability to mediate liquid-liquid phase separation is regulated by ATP: moderate concentrations of ATP enhance phase separation, whereas high concentrations of ATP lead to inhibition of phase separation. MRNA-binding protein that acts as a regulator of mRNAs transport, translation and/or stability, and which is involved in neurogenesis, synaptic plasticity in neurons and cell proliferation and migration in multiple cell types. Plays an essential role in cytoplasmic stress granule formation. Acts as an mRNA regulator by mediating formation of some phase-separated membraneless compartment: undergoes liquid-liquid phase separation upon binding to target mRNAs, leading to assemble mRNAs into cytoplasmic ribonucleoprotein granules that concentrate mRNAs with associated regulatory factors. Undergoes liquid-liquid phase separation following phosphorylation and interaction with FMR1, promoting formation of cytoplasmic ribonucleoprotein granules that concentrate mRNAs with factors that inhibit translation and mediate deadenylation of target mRNAs. In these cytoplasmic ribonucleoprotein granules, CAPRIN1 mediates recruitment of CNOT7 deadenylase, leading to mRNA deadenylation and degradation. Binds directly and selectively to MYC and CCND2 mRNAs. In neuronal cells, directly binds to several mRNAs associated with RNA granules, including BDNF, CAMK2A, CREB1, MAP2, NTRK2 mRNAs, as well as to GRIN1 and KPNB1 mRNAs, but not to rRNAs. In Bos taurus (Bovine), this protein is Caprin-1 (CAPRIN1).